A 172-amino-acid polypeptide reads, in one-letter code: Small ribosomal subunit protein uS5 (172 aa).

In terms of domain architecture, S5 DRBM spans 17–80; it reads MREKMIAVNR…EEARRKMIKV (64 aa).

The protein belongs to the universal ribosomal protein uS5 family. As to quaternary structure, part of the 30S ribosomal subunit. Contacts proteins S4 and S8.

Functionally, with S4 and S12 plays an important role in translational accuracy. Its function is as follows. Located at the back of the 30S subunit body where it stabilizes the conformation of the head with respect to the body. The sequence is that of Small ribosomal subunit protein uS5 from Herminiimonas arsenicoxydans.